Reading from the N-terminus, the 217-residue chain is ATP-dependent Clp protease proteolytic subunit (217 aa).

The active-site Nucleophile is the Ser121. His146 is an active-site residue.

The protein belongs to the peptidase S14 family. As to quaternary structure, fourteen ClpP subunits assemble into 2 heptameric rings which stack back to back to give a disk-like structure with a central cavity, resembling the structure of eukaryotic proteasomes.

The protein resides in the cytoplasm. It catalyses the reaction Hydrolysis of proteins to small peptides in the presence of ATP and magnesium. alpha-casein is the usual test substrate. In the absence of ATP, only oligopeptides shorter than five residues are hydrolyzed (such as succinyl-Leu-Tyr-|-NHMec, and Leu-Tyr-Leu-|-Tyr-Trp, in which cleavage of the -Tyr-|-Leu- and -Tyr-|-Trp bonds also occurs).. Cleaves peptides in various proteins in a process that requires ATP hydrolysis. Has a chymotrypsin-like activity. Plays a major role in the degradation of misfolded proteins. This is ATP-dependent Clp protease proteolytic subunit from Burkholderia vietnamiensis (strain G4 / LMG 22486) (Burkholderia cepacia (strain R1808)).